Consider the following 421-residue polypeptide: 4-hydroxy-3-methylbut-2-en-1-yl diphosphate synthase (flavodoxin) (421 aa).

Residues C311, C314, C357, and E364 each contribute to the [4Fe-4S] cluster site.

This sequence belongs to the IspG family. It depends on [4Fe-4S] cluster as a cofactor.

It carries out the reaction (2E)-4-hydroxy-3-methylbut-2-enyl diphosphate + oxidized [flavodoxin] + H2O + 2 H(+) = 2-C-methyl-D-erythritol 2,4-cyclic diphosphate + reduced [flavodoxin]. The protein operates within isoprenoid biosynthesis; isopentenyl diphosphate biosynthesis via DXP pathway; isopentenyl diphosphate from 1-deoxy-D-xylulose 5-phosphate: step 5/6. Converts 2C-methyl-D-erythritol 2,4-cyclodiphosphate (ME-2,4cPP) into 1-hydroxy-2-methyl-2-(E)-butenyl 4-diphosphate. In Xanthomonas axonopodis pv. citri (strain 306), this protein is 4-hydroxy-3-methylbut-2-en-1-yl diphosphate synthase (flavodoxin).